A 365-amino-acid polypeptide reads, in one-letter code: Phosphoserine aminotransferase (365 aa).

R40 serves as a coordination point for L-glutamate. Pyridoxal 5'-phosphate is bound by residues 74-75, F99, T155, D177, and Q200; that span reads AS. K201 carries the N6-(pyridoxal phosphate)lysine modification. 241-242 provides a ligand contact to pyridoxal 5'-phosphate; it reads NT.

This sequence belongs to the class-V pyridoxal-phosphate-dependent aminotransferase family. SerC subfamily. In terms of assembly, homodimer. It depends on pyridoxal 5'-phosphate as a cofactor.

The protein resides in the cytoplasm. It carries out the reaction O-phospho-L-serine + 2-oxoglutarate = 3-phosphooxypyruvate + L-glutamate. It catalyses the reaction 4-(phosphooxy)-L-threonine + 2-oxoglutarate = (R)-3-hydroxy-2-oxo-4-phosphooxybutanoate + L-glutamate. The protein operates within amino-acid biosynthesis; L-serine biosynthesis; L-serine from 3-phospho-D-glycerate: step 2/3. Its function is as follows. Catalyzes the reversible conversion of 3-phosphohydroxypyruvate to phosphoserine and of 3-hydroxy-2-oxo-4-phosphonooxybutanoate to phosphohydroxythreonine. The sequence is that of Phosphoserine aminotransferase from Lactococcus lactis subsp. cremoris (strain MG1363).